The sequence spans 103 residues: Heme-copper oxidase subunit 4 (103 aa).

The next 3 helical transmembrane spans lie at 20–40 (VWIV…EGIA), 42–62 (NPFV…ALFF), and 75–95 (ITVS…TSVL).

Its subcellular location is the cell membrane. In Aeropyrum pernix (strain ATCC 700893 / DSM 11879 / JCM 9820 / NBRC 100138 / K1), this protein is Heme-copper oxidase subunit 4 (aoxC).